We begin with the raw amino-acid sequence, 716 residues long: Phosphoribosylformylglycinamidine synthase subunit PurL (716 aa).

Histidine 34 is a catalytic residue. Position 37 (tyrosine 37) interacts with ATP. Glutamate 78 is a binding site for Mg(2+). Residues 79–82 and arginine 101 each bind substrate; that span reads SHNH. The Proton acceptor role is filled by histidine 80. Aspartate 102 is a Mg(2+) binding site. Glutamine 226 contacts substrate. Aspartate 254 provides a ligand contact to Mg(2+). 298-300 serves as a coordination point for substrate; sequence ESQ. Residues aspartate 474 and glycine 511 each contribute to the ATP site. A Mg(2+)-binding site is contributed by asparagine 512. Serine 514 is a binding site for substrate.

This sequence belongs to the FGAMS family. As to quaternary structure, monomer. Part of the FGAM synthase complex composed of 1 PurL, 1 PurQ and 2 PurS subunits.

It is found in the cytoplasm. The catalysed reaction is N(2)-formyl-N(1)-(5-phospho-beta-D-ribosyl)glycinamide + L-glutamine + ATP + H2O = 2-formamido-N(1)-(5-O-phospho-beta-D-ribosyl)acetamidine + L-glutamate + ADP + phosphate + H(+). Its pathway is purine metabolism; IMP biosynthesis via de novo pathway; 5-amino-1-(5-phospho-D-ribosyl)imidazole from N(2)-formyl-N(1)-(5-phospho-D-ribosyl)glycinamide: step 1/2. Functionally, part of the phosphoribosylformylglycinamidine synthase complex involved in the purines biosynthetic pathway. Catalyzes the ATP-dependent conversion of formylglycinamide ribonucleotide (FGAR) and glutamine to yield formylglycinamidine ribonucleotide (FGAM) and glutamate. The FGAM synthase complex is composed of three subunits. PurQ produces an ammonia molecule by converting glutamine to glutamate. PurL transfers the ammonia molecule to FGAR to form FGAM in an ATP-dependent manner. PurS interacts with PurQ and PurL and is thought to assist in the transfer of the ammonia molecule from PurQ to PurL. The sequence is that of Phosphoribosylformylglycinamidine synthase subunit PurL from Methanobrevibacter smithii (strain ATCC 35061 / DSM 861 / OCM 144 / PS).